Consider the following 286-residue polypeptide: Pantothenate synthetase (286 aa).

Residue 31–38 (MGALHDGH) coordinates ATP. The Proton donor role is filled by histidine 38. (R)-pantoate is bound at residue glutamine 62. Residue glutamine 62 coordinates beta-alanine. Residue 148–151 (GKKD) participates in ATP binding. Position 154 (glutamine 154) interacts with (R)-pantoate. ATP is bound by residues valine 177 and 185–188 (KSSR).

This sequence belongs to the pantothenate synthetase family. In terms of assembly, homodimer.

The protein localises to the cytoplasm. The catalysed reaction is (R)-pantoate + beta-alanine + ATP = (R)-pantothenate + AMP + diphosphate + H(+). It functions in the pathway cofactor biosynthesis; (R)-pantothenate biosynthesis; (R)-pantothenate from (R)-pantoate and beta-alanine: step 1/1. Its function is as follows. Catalyzes the condensation of pantoate with beta-alanine in an ATP-dependent reaction via a pantoyl-adenylate intermediate. In Staphylococcus carnosus (strain TM300), this protein is Pantothenate synthetase.